A 362-amino-acid chain; its full sequence is MAVVAPRTLLLLLSGTLALTRTWAGSHSMRYFYTTMSRPGRGEPRFISVGYVDDTQFVRFDSDDASPREEPRAPWMEREGPEYWDRNTQIYKAQAQTDRVDLETLRGYYNQSEGGSHTIQRMYGCEVGPDGRFLRGYLQDAYDGKDYITLNEDLRSWTAADMAAQITQRKWEAAREAERLRAYMEGTCVEWLRRHLENGKETLQRTDPPKTHMTHHPVSDHEATLRCWALGFYPAEITLTWQRDGEDQTQDTELVETRPGGDGTFQKWAAVVVPSGKEQRYTCHVQHEGLPKPLTLRWEPSSQPTIPIVGIIAGLVLLGAVITGAVVAAMMWRKKSSGRKGGSYSQAASSDSAQGSDVSLTA.

The first 24 residues, 1-24 (MAVVAPRTLLLLLSGTLALTRTWA), serve as a signal peptide directing secretion. Residues 25–114 (GSHSMRYFYT…LRGYYNQSEG (90 aa)) form an alpha-1 region. The Extracellular portion of the chain corresponds to 25 to 308 (GSHSMRYFYT…EPSSQPTIPI (284 aa)). N-linked (GlcNAc...) asparagine glycosylation is present at N110. An alpha-2 region spans residues 115–206 (GSHTIQRMYG…ENGKETLQRT (92 aa)). 2 disulfide bridges follow: C125-C188 and C227-C283. Residues 207–298 (DPPKTHMTHH…GLPKPLTLRW (92 aa)) form an alpha-3 region. The region spanning 209-295 (PKTHMTHHPV…QHEGLPKPLT (87 aa)) is the Ig-like C1-type domain. The segment at 299–308 (EPSSQPTIPI) is connecting peptide. A helical membrane pass occupies residues 309 to 332 (VGIIAGLVLLGAVITGAVVAAMMW). The Cytoplasmic segment spans residues 333-362 (RKKSSGRKGGSYSQAASSDSAQGSDVSLTA). The disordered stretch occupies residues 337-362 (SGRKGGSYSQAASSDSAQGSDVSLTA). A compositionally biased stretch (low complexity) spans 342-362 (GSYSQAASSDSAQGSDVSLTA).

This sequence belongs to the MHC class I family. As to quaternary structure, heterodimer of an alpha chain and a beta chain (beta-2-microglobulin).

The protein localises to the membrane. Its function is as follows. Involved in the presentation of foreign antigens to the immune system. In Gorilla gorilla gorilla (Western lowland gorilla), this protein is Class I histocompatibility antigen, Gogo-OKO alpha chain.